Here is a 117-residue protein sequence, read N- to C-terminus: Large ribosomal subunit protein bL19 (117 aa).

It belongs to the bacterial ribosomal protein bL19 family.

This protein is located at the 30S-50S ribosomal subunit interface and may play a role in the structure and function of the aminoacyl-tRNA binding site. This is Large ribosomal subunit protein bL19 from Exiguobacterium sibiricum (strain DSM 17290 / CCUG 55495 / CIP 109462 / JCM 13490 / 255-15).